Here is a 77-residue protein sequence, read N- to C-terminus: MNVKILTLVIVLVVSLLCSASAGPMASTEHSKEIEEVGSMRTPLRQNPARAGRSQRPAGWRRRRPRPRLSHKGPMPF.

An N-terminal signal peptide occupies residues 1–22 (MNVKILTLVIVLVVSLLCSASA). Positions 21-77 (SAGPMASTEHSKEIEEVGSMRTPLRQNPARAGRSQRPAGWRRRRPRPRLSHKGPMPF) are disordered. Basic residues predominate over residues 59–71 (GWRRRRPRPRLSH).

Belongs to the apelin family.

The protein localises to the secreted. It is found in the extracellular space. Peptide hormone that functions as endogenous ligand for the G-protein-coupled apelin receptor (aplnra and/or aplnrb), that plays a role in cadiovascular homeostasis. Functions as a balanced agonist activating both G(i) protein pathway and beta-arrestin pathway of APLNR. Downstream G proteins activation, apelin can inhibit cAMP production and activate key intracellular effectors such as ERKs. On the other hand, APLNR activation induces beta-arrestin recruitment to the membrane leading to desensitization and internalization of the receptor. Apelin blunts cardiac hypertrophic induction from APLNR on response to pathological stimuli, but also induces myocardial hypertrophy under normal conditions. Involved in the regulation of cardiac precursor cell movements during gastrulation and heart morphogenesis. Plays a role in early coronary blood vessels formation. Mediates myocardial contractility in an ERK1/2-dependent manner. May also have a role in the central control of body fluid homeostasis. This Danio rerio (Zebrafish) protein is Apelin.